Consider the following 140-residue polypeptide: Anti-sigma F factor (140 aa).

This sequence belongs to the anti-sigma-factor family.

The enzyme catalyses L-seryl-[protein] + ATP = O-phospho-L-seryl-[protein] + ADP + H(+). The catalysed reaction is L-threonyl-[protein] + ATP = O-phospho-L-threonyl-[protein] + ADP + H(+). In terms of biological role, binds to sigma F and blocks its ability to form an RNA polymerase holoenzyme (E-sigma F). Phosphorylates SpoIIAA on a serine residue. This phosphorylation may enable SpoIIAA to act as an anti-anti-sigma factor that counteracts SpoIIAB and thus releases sigma F from inhibition. This Clostridium perfringens (strain ATCC 13124 / DSM 756 / JCM 1290 / NCIMB 6125 / NCTC 8237 / Type A) protein is Anti-sigma F factor.